Here is a 253-residue protein sequence, read N- to C-terminus: Glucosamine-6-phosphate deaminase (253 aa).

The active-site Proton acceptor; for enolization step is D65. N133 acts as the For ring-opening step in catalysis. H135 acts as the Proton acceptor; for ring-opening step in catalysis. E140 serves as the catalytic For ring-opening step.

The protein belongs to the glucosamine/galactosamine-6-phosphate isomerase family. NagB subfamily.

It carries out the reaction alpha-D-glucosamine 6-phosphate + H2O = beta-D-fructose 6-phosphate + NH4(+). It functions in the pathway amino-sugar metabolism; N-acetylneuraminate degradation; D-fructose 6-phosphate from N-acetylneuraminate: step 5/5. Functionally, catalyzes the reversible isomerization-deamination of glucosamine 6-phosphate (GlcN6P) to form fructose 6-phosphate (Fru6P) and ammonium ion. The protein is Glucosamine-6-phosphate deaminase of Corynebacterium efficiens (strain DSM 44549 / YS-314 / AJ 12310 / JCM 11189 / NBRC 100395).